The following is a 910-amino-acid chain: MASSAQSGGSSGGPAVPTVQRGIVKMVLSGCAIIVRGQPRGGPPPERQINLSNIRAGNLARRAAVAQPDAKDTPDEPWAFPAREFLRKKLIGKEVCFTIENKTPQGREYGMIYLGKDTNGENIAESLVAEGLATRREGMRANNPEQNRLAECEEQAKASKKGMWSEGNGSHTIRDLKYTIENPRHFVDSHHQKPVNAIIEHVRDGSVVRALLLPDYYLVTVMLSGIKCPTFRREADGSETPEPFAAEAKFFTESRLLQRDVQIILESCHNQNILGTILHPNGNITELLLKEGFARCVDWSIAVYTRGAEKLRAAERFAKERRLRIWRDYVAPTANLDQKDKQFVAKVMQVLNADAIVVKLNSGDYKTIHLSSIRPPRLEGENTQDKNKKLRPLYDIPYMFEAREFLRKKLIGKKVNVTVDYIRPASPATDTVPAFSERTCATVTIGGINIAEALVSKGLATVIRYRQDDDQRSSHYDELLAAEARAIKNGKGLHSKKEVPIHRVADISGDTQKAKQFLPFLQRAGRSEAVVEYVFSGSRLKLYLPKETCLITFLLAGIECPRGARNLPGLVQEGEPFSEEATLFTKELVLQREVEVEVESMDKAGNFIGWLHIDGANLSVLLVEHALSKVHFTAERSAYYKSLLSAEEAAKQKKEKVWAHYEEQPVEELMPVLEEKERSASYKPVFVTEITDDLHFYVQDVETGTQLEKLMENMRNDIASHPPVEGSYAPRRGEFCIAKFVDGEWYRARVEKVESPAKVHVFYIDYGNREILPSTRLGTLPPAFSTRVLPAQATEYAFAFIQVPQDEDARTDAVDSVVRDIQNTQCLLNVEHLSAGCPHVTLQFADSKGDVGLGLVKEGLVMVEVRKEKQFQKVITEYLNAQESAKSARLNLWRYGDFRADDADEFGYSR.

A2 is modified (N-acetylalanine). 3 consecutive TNase-like domains span residues 18–166, 193–328, and 341–496; these read TVQR…MWSE, KPVN…IWRD, and KQFV…LHSK. A Phosphothreonine modification is found at T103. Position 193 is an N6-acetyllysine (K193). T240 carries the phosphothreonine modification. 2 consecutive short sequence motifs (nuclear localization signal) follow at residues 321–325 and 388–392; these read RRLRI and KKLRP. S426 carries the post-translational modification Phosphoserine. A Glycyl lysine isopeptide (Lys-Gly) (interchain with G-Cter in SUMO2) cross-link involves residue K513. Residues 525–660 form the TNase-like 4 domain; that stretch reads GRSEAVVEYV…KQKKEKVWAH (136 aa). K641 is modified (N6-acetyllysine). Residue S645 is modified to Phosphoserine. A Tudor domain is found at 729 to 787; that stretch reads APRRGEFCIAKFVDGEWYRARVEKVESPAKVHVFYIDYGNREILPSTRLGTLPPAFSTR. T779 is modified (phosphothreonine). A phosphoserine mark is found at S785 and S909.

As to quaternary structure, forms a ternary complex with STAT6 and POLR2A. Associates with the RNA-induced silencing complex (RISC). Interacts with the RISC components AGO2, FMR1 and TNRC6A. Interacts with GTF2E1 and GTF2E2. Interacts with PIM1. Interacts with STAT5. Interacts with SYT11 (via C2 2 domain); the interaction with SYT11 is direct. Phosphorylated by PIM1 in vitro. As to expression, in lactating cows highly expressed in mammary epithelial cells.

The protein resides in the cytoplasm. It is found in the nucleus. It localises to the melanosome. The enzyme catalyses Endonucleolytic cleavage to nucleoside 3'-phosphates and 3'-phosphooligonucleotide end-products.. Its function is as follows. Endonuclease that mediates miRNA decay of both protein-free and AGO2-loaded miRNAs. As part of its function in miRNA decay, regulates mRNAs involved in G1-to-S phase transition. Functions as a bridging factor between STAT6 and the basal transcription factor. Plays a role in PIM1 regulation of MYB activity. Functions as a transcriptional coactivator for STAT5. This chain is Staphylococcal nuclease domain-containing protein 1 (SND1), found in Bos taurus (Bovine).